The following is a 118-amino-acid chain: Small ribosomal subunit protein uS13 (118 aa).

Positions 95–118 (LPLRGQRTRTNARTRKGPRKAIKK) are disordered.

This sequence belongs to the universal ribosomal protein uS13 family. In terms of assembly, part of the 30S ribosomal subunit. Forms a loose heterodimer with protein S19. Forms two bridges to the 50S subunit in the 70S ribosome.

Located at the top of the head of the 30S subunit, it contacts several helices of the 16S rRNA. In the 70S ribosome it contacts the 23S rRNA (bridge B1a) and protein L5 of the 50S subunit (bridge B1b), connecting the 2 subunits; these bridges are implicated in subunit movement. Contacts the tRNAs in the A and P-sites. The sequence is that of Small ribosomal subunit protein uS13 from Xylella fastidiosa (strain 9a5c).